The following is a 98-amino-acid chain: Defensin-like protein 219 (98 aa).

Residues 1-16 form the signal peptide; that stretch reads MKTIFVFLTLAVLVSS. Cystine bridges form between cysteine 68-cysteine 85, cysteine 71-cysteine 90, and cysteine 75-cysteine 92.

Belongs to the DEFL family.

Its subcellular location is the secreted. This Arabidopsis thaliana (Mouse-ear cress) protein is Defensin-like protein 219.